Reading from the N-terminus, the 100-residue chain is Urease subunit gamma (100 aa).

The protein belongs to the urease gamma subunit family. As to quaternary structure, heterotrimer of UreA (gamma), UreB (beta) and UreC (alpha) subunits. Three heterotrimers associate to form the active enzyme.

Its subcellular location is the cytoplasm. The catalysed reaction is urea + 2 H2O + H(+) = hydrogencarbonate + 2 NH4(+). It functions in the pathway nitrogen metabolism; urea degradation; CO(2) and NH(3) from urea (urease route): step 1/1. This is Urease subunit gamma from Bacillus cereus (strain ATCC 10987 / NRS 248).